The sequence spans 1499 residues: Collagen alpha-2(V) chain (1499 aa).

The signal sequence occupies residues 1-26; the sequence is MMANWAEARPLLILIVLLGQFVSIKA. The region spanning 39-97 is the VWFC domain; that stretch reads IACTQNGQMYLNRDIWKPAPCQICVCDNGAILCDKIECQDVLDCADPVTPPGECCPVCS. Residues 104–1268 form a disordered region; the sequence is NTNFGRGRKG…DDKNKTDPGV (1165 aa). A compositionally biased stretch (pro residues) spans 170–182; the sequence is PGAPGPPGHPSHP. Positions 212–227 are enriched in low complexity; the sequence is PGSVGPVGPRGPQGLQ. The span at 236–248 shows a compositional bias: pro residues; sequence TGPPGEPGDPGPM. 3 positions are modified to hydroxyproline: P290, P293, and P296. Low complexity-rich tracts occupy residues 322 to 340 and 427 to 443; these read EAGP…PRGM and TPGA…SGPP. Residues 506-508 carry the Cell attachment site motif; sequence RGD. Low complexity-rich tracts occupy residues 604–626 and 694–709; these read SIGI…SGDP and DQGV…PLGP. Hydroxyproline occurs at positions 611 and 617. Basic and acidic residues predominate over residues 710–721; it reads RGERGNPGERGE. The segment covering 732–741 has biased composition (gly residues); that stretch reads GMAGGHGPDG. The segment covering 742–758 has biased composition (low complexity); the sequence is PKGSPGPSGTPGDTGPP. Over residues 776-787 the composition is skewed to basic and acidic residues; the sequence is KGDRGGIGEKGA. Over residues 826 to 841 the composition is skewed to low complexity; sequence PPGSRGNPGSRGENGP. The segment covering 894–903 has biased composition (gly residues); that stretch reads GLKGGRGTQG. The residue at position 919 (P919) is a 3-hydroxyproline; partial. Residues 919–929 show a composition bias toward pro residues; the sequence is PPGPAGAPGPA. Short sequence motifs (cell attachment site) lie at residues 944-946, 1067-1069, 1070-1072, 1100-1102, 1127-1129, and 1136-1138; these read RGD. The segment covering 1063 to 1072 has biased composition (basic and acidic residues); sequence AVGERGDRGD. Over residues 1093–1114 the composition is skewed to low complexity; sequence APGDAGQRGDPGSRGPIGPPGR. Residues 1127 to 1141 are compositionally biased toward basic and acidic residues; that stretch reads RGDKGDHGDRGDRGQ. P1156 carries the post-translational modification 3-hydroxyproline; partial. 2 stretches are compositionally biased toward pro residues: residues 1171–1181 and 1211–1226; these read PFGPRGPPGPV and EGPP…PGPP. The propeptide at 1230 to 1499 is C-terminal propeptide; sequence TAALGDIMGH…GVEIGPVCFV (270 aa). The N-linked (GlcNAc...) asparagine glycan is linked to N1262. Residues 1266–1499 enclose the Fibrillar collagen NC1 domain; sequence PGVHATLKSL…GVEIGPVCFV (234 aa). Intrachain disulfides connect C1296–C1328, C1336–C1497, and C1405–C1450. Residues D1314, N1316, Q1317, and D1322 each coordinate Ca(2+). N1400 is a glycosylation site (N-linked (GlcNAc...) asparagine).

This sequence belongs to the fibrillar collagen family. In terms of assembly, trimers of two alpha 1(V) and one alpha 2(V) chains in most tissues and trimers of one alpha 1(V), one alpha 2(V), and one alpha 3(V) chains in placenta. In terms of processing, prolines at the third position of the tripeptide repeating unit (G-X-P) are hydroxylated in some or all of the chains. Probably 3-hydroxylated on Pro-919 and Pro-1156 by LEPREL1.

It is found in the secreted. Its subcellular location is the extracellular space. The protein localises to the extracellular matrix. Type V collagen is a member of group I collagen (fibrillar forming collagen). It is a minor connective tissue component of nearly ubiquitous distribution. Type V collagen binds to DNA, heparan sulfate, thrombospondin, heparin, and insulin. Type V collagen is a key determinant in the assembly of tissue-specific matrices. This is Collagen alpha-2(V) chain (COL5A2) from Homo sapiens (Human).